A 47-amino-acid polypeptide reads, in one-letter code: MARKYGKAARKCSRCGDHSAIVRRYGLNLCRQCFREIAPKIGFKKYN.

Residues Cys12, Cys15, Cys30, and Cys33 each contribute to the Zn(2+) site.

This sequence belongs to the universal ribosomal protein uS14 family. Zinc-binding uS14 subfamily. As to quaternary structure, part of the 30S ribosomal subunit. Zn(2+) is required as a cofactor.

Binds 16S rRNA, required for the assembly of 30S particles. The chain is Small ribosomal subunit protein uS14 from Methanosphaera stadtmanae (strain ATCC 43021 / DSM 3091 / JCM 11832 / MCB-3).